The following is a 213-amino-acid chain: N-(5'-phosphoribosyl)anthranilate isomerase (213 aa).

The protein belongs to the TrpF family.

It catalyses the reaction N-(5-phospho-beta-D-ribosyl)anthranilate = 1-(2-carboxyphenylamino)-1-deoxy-D-ribulose 5-phosphate. It participates in amino-acid biosynthesis; L-tryptophan biosynthesis; L-tryptophan from chorismate: step 3/5. The protein is N-(5'-phosphoribosyl)anthranilate isomerase of Roseiflexus sp. (strain RS-1).